Reading from the N-terminus, the 147-residue chain is Large ribosomal subunit protein uL13 (147 aa).

The protein belongs to the universal ribosomal protein uL13 family. As to quaternary structure, part of the 50S ribosomal subunit.

In terms of biological role, this protein is one of the early assembly proteins of the 50S ribosomal subunit, although it is not seen to bind rRNA by itself. It is important during the early stages of 50S assembly. This is Large ribosomal subunit protein uL13 from Rhodococcus jostii (strain RHA1).